The chain runs to 123 residues: U11/U12 small nuclear ribonucleoprotein 25 kDa protein (123 aa).

Positions 32 to 123 constitute a Ubiquitin-like domain; the sequence is MTVRVCKMDG…VSFIKKLRQK (92 aa).

In terms of assembly, component of the U11/U12 snRNPs that are part of the U12-type spliceosome.

It localises to the nucleus. This chain is U11/U12 small nuclear ribonucleoprotein 25 kDa protein (Snrnp25), found in Mus musculus (Mouse).